Here is a 542-residue protein sequence, read N- to C-terminus: LysM domain-containing protein ARB_00327 (542 aa).

Residues 1–35 form the signal peptide; the sequence is MLSSVLFPAMRTLLLLKYVFSLISLSAICCQTVSA. N-linked (GlcNAc...) asparagine glycosylation is found at N218, N298, N381, and N415. The LysM 1 domain maps to 264 to 310; it reads RWYGVKKGDYCNLIVLKFGITMDNFIFLNPALNSNCTNLYAEESYCV. The segment at 439-484 is disordered; the sequence is DSDEPTPTTPITTSDDPTSTSATPTTPTTSSKPSPGAPTMTGQPSA. A compositionally biased stretch (low complexity) spans 443 to 472; it reads PTPTTPITTSDDPTSTSATPTTPTTSSKPS. The LysM 2 domain maps to 487–534; sequence KWHTVTNGESCTVIPKTFGITLEQFLAWNPTVKSDCTENFWAGYAYCV.

It localises to the secreted. Its function is as follows. Might have a role in sequestration of chitin oligosaccharides (breakdown products of fungal cell walls that are released during invasion and act as triggers of host immunity) to dampen host defense. The polypeptide is LysM domain-containing protein ARB_00327 (Arthroderma benhamiae (strain ATCC MYA-4681 / CBS 112371) (Trichophyton mentagrophytes)).